Here is a 162-residue protein sequence, read N- to C-terminus: Ribosomal RNA large subunit methyltransferase H (162 aa).

S-adenosyl-L-methionine is bound by residues leucine 78, glycine 109, and 128–133; that span reads LSALTL.

Belongs to the RNA methyltransferase RlmH family. As to quaternary structure, homodimer.

The protein localises to the cytoplasm. The enzyme catalyses pseudouridine(1915) in 23S rRNA + S-adenosyl-L-methionine = N(3)-methylpseudouridine(1915) in 23S rRNA + S-adenosyl-L-homocysteine + H(+). Functionally, specifically methylates the pseudouridine at position 1915 (m3Psi1915) in 23S rRNA. In Psychrobacter arcticus (strain DSM 17307 / VKM B-2377 / 273-4), this protein is Ribosomal RNA large subunit methyltransferase H.